A 278-amino-acid polypeptide reads, in one-letter code: 4-deoxy-L-threo-5-hexosulose-uronate ketol-isomerase (278 aa).

Histidine 196, histidine 198, glutamate 203, and histidine 245 together coordinate Zn(2+).

This sequence belongs to the KduI family. Homohexamer. Zn(2+) serves as cofactor.

It catalyses the reaction 5-dehydro-4-deoxy-D-glucuronate = 3-deoxy-D-glycero-2,5-hexodiulosonate. It participates in glycan metabolism; pectin degradation; 2-dehydro-3-deoxy-D-gluconate from pectin: step 4/5. In terms of biological role, catalyzes the isomerization of 5-dehydro-4-deoxy-D-glucuronate to 3-deoxy-D-glycero-2,5-hexodiulosonate. The protein is 4-deoxy-L-threo-5-hexosulose-uronate ketol-isomerase of Escherichia coli O127:H6 (strain E2348/69 / EPEC).